The following is a 250-amino-acid chain: Probable ABC transporter permease protein BAB2_1148 (250 aa).

A run of 6 helical transmembrane segments spans residues 12–32, 63–83, 94–114, 122–142, 172–192, and 211–231; these read LLSF…GAVV, VLSG…LMGW, WVQF…IVTL, IFVI…QGVI, VPFI…TVVA, and LYYD…LGLF. Residues 56-236 enclose the ABC transmembrane type-1 domain; the sequence is IFASLRRVLS…ILGLFMDRLL (181 aa).

Belongs to the binding-protein-dependent transport system permease family. In terms of assembly, the complex is composed of two ATP-binding proteins (BAB2_1147), two transmembrane proteins (BAB2_1148) and a solute-binding protein (BAB2_1146).

The protein resides in the cell inner membrane. In terms of biological role, probably part of an ABC transporter complex. Probably responsible for the translocation of the substrate across the membrane. In Brucella abortus (strain 2308), this protein is Probable ABC transporter permease protein BAB2_1148.